The following is a 254-amino-acid chain: Transcription factor CAULIFLOWER (254 aa).

Residues 1 to 61 form the MADS-box domain; the sequence is MGRGRVEMKR…GKLFEYSSES (61 aa). Residues 90–180 enclose the K-box domain; the sequence is QTNWSMEYSR…TKQIKERESI (91 aa). Residues 182-191 are compositionally biased toward polar residues; sequence RTHQNQSEQQ. The tract at residues 182–205 is disordered; the sequence is RTHQNQSEQQNRSHHVAPQPQPQL.

Homodimer capable of binding to CArG-box sequences.

It is found in the nucleus. In terms of biological role, probable transcription factor that promotes early floral meristem identity in synergy with APETALA1, FRUITFULL and LEAFY. Is required subsequently for the transition of an inflorescence meristem into a floral meristem. Seems to be partially redundant to the function of APETALA1. The polypeptide is Transcription factor CAULIFLOWER (CAL) (Brassica rapa subsp. chinensis (Pak-choi)).